A 115-amino-acid polypeptide reads, in one-letter code: Phosphoribosyl-AMP cyclohydrolase (115 aa).

Mg(2+) is bound at residue Asp80. A Zn(2+)-binding site is contributed by Cys81. Residues Asp82 and Asp84 each contribute to the Mg(2+) site. 2 residues coordinate Zn(2+): Cys97 and Cys104.

This sequence belongs to the PRA-CH family. In terms of assembly, homodimer. The cofactor is Mg(2+). Requires Zn(2+) as cofactor.

Its subcellular location is the cytoplasm. It catalyses the reaction 1-(5-phospho-beta-D-ribosyl)-5'-AMP + H2O = 1-(5-phospho-beta-D-ribosyl)-5-[(5-phospho-beta-D-ribosylamino)methylideneamino]imidazole-4-carboxamide. Its pathway is amino-acid biosynthesis; L-histidine biosynthesis; L-histidine from 5-phospho-alpha-D-ribose 1-diphosphate: step 3/9. In terms of biological role, catalyzes the hydrolysis of the adenine ring of phosphoribosyl-AMP. The sequence is that of Phosphoribosyl-AMP cyclohydrolase from Mycobacterium bovis (strain ATCC BAA-935 / AF2122/97).